The chain runs to 412 residues: Multifunctional CCA protein (412 aa).

2 residues coordinate ATP: G8 and R11. Residues G8 and R11 each contribute to the CTP site. Mg(2+)-binding residues include D21 and D23. ATP contacts are provided by R91, R137, and R140. CTP is bound by residues R91, R137, and R140. In terms of domain architecture, HD spans 226–327; the sequence is TGIHTMMVID…VTLFEKTDAL (102 aa).

This sequence belongs to the tRNA nucleotidyltransferase/poly(A) polymerase family. Bacterial CCA-adding enzyme type 1 subfamily. Monomer. Can also form homodimers and oligomers. Mg(2+) serves as cofactor. Requires Ni(2+) as cofactor.

The enzyme catalyses a tRNA precursor + 2 CTP + ATP = a tRNA with a 3' CCA end + 3 diphosphate. It carries out the reaction a tRNA with a 3' CCA end + 2 CTP + ATP = a tRNA with a 3' CCACCA end + 3 diphosphate. Catalyzes the addition and repair of the essential 3'-terminal CCA sequence in tRNAs without using a nucleic acid template. Adds these three nucleotides in the order of C, C, and A to the tRNA nucleotide-73, using CTP and ATP as substrates and producing inorganic pyrophosphate. tRNA 3'-terminal CCA addition is required both for tRNA processing and repair. Also involved in tRNA surveillance by mediating tandem CCA addition to generate a CCACCA at the 3' terminus of unstable tRNAs. While stable tRNAs receive only 3'-terminal CCA, unstable tRNAs are marked with CCACCA and rapidly degraded. This chain is Multifunctional CCA protein, found in Dechloromonas aromatica (strain RCB).